The sequence spans 39 residues: Cytochrome b559 subunit beta (39 aa).

The helical transmembrane segment at 14–30 (WLAIHGLAVPTVSFLGS) threads the bilayer. His18 is a binding site for heme.

This sequence belongs to the PsbE/PsbF family. Heterodimer of an alpha subunit and a beta subunit. PSII is composed of 1 copy each of membrane proteins PsbA, PsbB, PsbC, PsbD, PsbE, PsbF, PsbH, PsbI, PsbJ, PsbK, PsbL, PsbM, PsbT, PsbX, PsbY, PsbZ, Psb30/Ycf12, at least 3 peripheral proteins of the oxygen-evolving complex and a large number of cofactors. It forms dimeric complexes. Requires heme b as cofactor.

It is found in the plastid. The protein localises to the chloroplast thylakoid membrane. Functionally, this b-type cytochrome is tightly associated with the reaction center of photosystem II (PSII). PSII is a light-driven water:plastoquinone oxidoreductase that uses light energy to abstract electrons from H(2)O, generating O(2) and a proton gradient subsequently used for ATP formation. It consists of a core antenna complex that captures photons, and an electron transfer chain that converts photonic excitation into a charge separation. The polypeptide is Cytochrome b559 subunit beta (Allium textile (Textile onion)).